A 228-amino-acid chain; its full sequence is MPVKGGTKCIKYLLFGFNFIFWLAGIAVLAIGLWLRFDSQTKSIFEQETNNNNSSFYTGVYILIGAGALMMLVGFLGCCGAVQESQCMLGLFFGFLLVIFAIEIAAAIWGYSHKDEVIKEVQEFYKDTYNKLKTKDEPQRETLKAIHYALDCCGLAGGVEQFISDICPKKDVLETFTIKSCPDAIKEVFDNKFHIIGAVGIGIAVVMIFGMIFSMILCCAIRRNREMV.

At 1 to 12 the chain is on the cytoplasmic side; that stretch reads MPVKGGTKCIKY. The S-palmitoyl cysteine moiety is linked to residue C9. A helical transmembrane segment spans residues 13–33; the sequence is LLFGFNFIFWLAGIAVLAIGL. At 34-55 the chain is on the extracellular side; sequence WLRFDSQTKSIFEQETNNNNSS. 2 N-linked (GlcNAc...) asparagine glycosylation sites follow: N52 and N53. The helical transmembrane segment at 56–76 threads the bilayer; the sequence is FYTGVYILIGAGALMMLVGFL. Topologically, residues 77-87 are cytoplasmic; the sequence is GCCGAVQESQC. S-palmitoyl cysteine attachment occurs at residues C78, C79, and C87. A helical transmembrane segment spans residues 88-111; sequence MLGLFFGFLLVIFAIEIAAAIWGY. At 112–195 the chain is on the extracellular side; it reads SHKDEVIKEV…KEVFDNKFHI (84 aa). Cystine bridges form between C152–C181 and C153–C167. A helical transmembrane segment spans residues 196 to 221; sequence IGAVGIGIAVVMIFGMIFSMILCCAI. 2 S-palmitoyl cysteine lipidation sites follow: C218 and C219. Residues 222-228 are Cytoplasmic-facing; sequence RRNREMV.

It belongs to the tetraspanin (TM4SF) family. As to quaternary structure, forms both disulfide-linked homodimers and higher homooligomers as well as heterooligomers with other members of the tetraspanin family. Interacts (via the second extracellular domain) with integrin ITGAV:ITGB3. Interacts with integrin ITGA6:ITGB1; interaction takes place in oocytes and is involved in sperm-egg fusion. Part of integrin-tetraspanin complexes composed of CD81, beta-1 and beta-2 integrins in the membrane of monocyte/macrophages. Interacts with CD63; identified in a complex with CD63 and ITGB3. Associates with CR2/CD21 and with PTGFRN/CD9P1. Part of a complex composed of CD9, CD81, PTGFRN and IGSF8. Interacts directly with IGSF8. Interacts with PDPN; this interaction is homophilic and attenuates platelet aggregation and pulmonary metastasis induced by PDPN. Interacts (on T cell side) with CD81 at immunological synapses between antigen-presenting cells and T cells. Post-translationally, palmitoylated at a low, basal level in unstimulated platelets. The level of palmitoylation increases when platelets are activated by thrombin (in vitro). The protein exists in three forms with molecular masses between 22 and 27 kDa, and is known to carry covalently linked fatty acids. Palmitoylation by ZDHHC2 regulates CD9 expression, association with other tetraspanin family proteins and function in cell adhesion.

The protein resides in the cell membrane. It localises to the membrane. It is found in the secreted. Its subcellular location is the extracellular exosome. Functionally, integral membrane protein associated with integrins, which regulates different processes, such as sperm-egg fusion, platelet activation and aggregation, and cell adhesion. Present at the cell surface of oocytes and plays a key role in sperm-egg fusion, possibly by organizing multiprotein complexes and the morphology of the membrane required for the fusion. In myoblasts, associates with CD81 and PTGFRN and inhibits myotube fusion during muscle regeneration. In macrophages, associates with CD81 and beta-1 and beta-2 integrins, and prevents macrophage fusion into multinucleated giant cells specialized in ingesting complement-opsonized large particles. Also prevents the fusion between mononuclear cell progenitors into osteoclasts in charge of bone resorption. Acts as a receptor for PSG17. Involved in platelet activation and aggregation. Regulates paranodal junction formation. Involved in cell adhesion, cell motility and tumor metastasis. This is CD9 antigen from Chlorocebus aethiops (Green monkey).